The primary structure comprises 219 residues: Small ribosomal subunit protein uS3 (219 aa).

Residues 39–107 form the KH type-2 domain; that stretch reads LRKFLKKKLH…EVLIDIQEVR (69 aa).

Belongs to the universal ribosomal protein uS3 family. As to quaternary structure, part of the 30S ribosomal subunit. Forms a tight complex with proteins S10 and S14.

Binds the lower part of the 30S subunit head. Binds mRNA in the 70S ribosome, positioning it for translation. The polypeptide is Small ribosomal subunit protein uS3 (Desulfatibacillum aliphaticivorans).